The following is a 425-amino-acid chain: Serine--tRNA ligase (425 aa).

L-serine is bound at residue 230 to 232 (TAE). Position 261–263 (261–263 (RSE)) interacts with ATP. Glu-284 contributes to the L-serine binding site. 348–351 (EISS) contacts ATP. Ser-384 is an L-serine binding site.

It belongs to the class-II aminoacyl-tRNA synthetase family. Type-1 seryl-tRNA synthetase subfamily. As to quaternary structure, homodimer. The tRNA molecule binds across the dimer.

Its subcellular location is the cytoplasm. The catalysed reaction is tRNA(Ser) + L-serine + ATP = L-seryl-tRNA(Ser) + AMP + diphosphate + H(+). It catalyses the reaction tRNA(Sec) + L-serine + ATP = L-seryl-tRNA(Sec) + AMP + diphosphate + H(+). It participates in aminoacyl-tRNA biosynthesis; selenocysteinyl-tRNA(Sec) biosynthesis; L-seryl-tRNA(Sec) from L-serine and tRNA(Sec): step 1/1. Its function is as follows. Catalyzes the attachment of serine to tRNA(Ser). Is also able to aminoacylate tRNA(Sec) with serine, to form the misacylated tRNA L-seryl-tRNA(Sec), which will be further converted into selenocysteinyl-tRNA(Sec). The sequence is that of Serine--tRNA ligase from Streptococcus pyogenes serotype M4 (strain MGAS10750).